The chain runs to 410 residues: Lysosome-associated membrane glycoprotein 2 (410 aa).

An N-terminal signal peptide occupies residues 1–28; sequence MMCFRLSPVSGSGLVLSCLLLGAVQSYA. The tract at residues 29 to 192 is first lumenal domain; that stretch reads FELNLPDSKA…SKEEFVCEED (164 aa). Over 29 to 375 the chain is Lumenal; the sequence is FELNLPDSKA…QDCSADEDNF (347 aa). A disulfide bridge links Cys40 with Cys79. N-linked (GlcNAc...) asparagine glycosylation is found at Asn48, Asn58, Asn71, Asn75, Asn99, Asn119, Asn123, Asn179, Asn222, Asn229, Asn242, Asn260, Asn275, Asn300, Asn307, Asn317, and Asn356. Cys153 and Cys189 are disulfide-bonded. The interval 193–228 is hinge; it reads KSVTTVRPIIHTTVPPPTTTPTPLPPKVGNYSVSNG. The interval 229–375 is second lumenal domain; it reads NATCLLATMG…QDCSADEDNF (147 aa). Cys232 and Cys265 are oxidised to a cystine. A disulfide bridge connects residues Cys331 and Cys368. A helical membrane pass occupies residues 376–399; it reads LVPIAVGAALAGVLALVLLAYFIG. Over 400-410 the chain is Cytoplasmic; it reads LKRHHTGYEQF. An important for binding and subsequent lysosomal degradation of target proteins region spans residues 401–404; the sequence is KRHH.

This sequence belongs to the LAMP family. In terms of assembly, monomer. Forms large homooligomers. Interacts (via its cytoplasmic region) with HSPA8; HSPA8 mediates recruitment of proteins with a KFERQ motif to the surface of the lysosome for chaperone-mediated autophagy. Interacts with HSP90 in the lysosome lumen; this enhances LAMP2 stability. Interacts with MLLT11. Interacts with ABCB9. Interacts with FURIN. Interacts with CT55; this interaction may be important for LAMP2 protein stability. Interacts with TMEM175; inhibiting the proton channel activity of TMEM175. Forms a ternary complex with RAB7A and RUFY4 (via RUN domain); the interaction with RAB7A is mediated by RUFY4 (via RUN and coiled coil domains). Extensively N-glycosylated. Contains a minor proportion of O-linked glycans.

The protein resides in the lysosome membrane. Its subcellular location is the endosome membrane. It is found in the cell membrane. It localises to the cytoplasmic vesicle. The protein localises to the autophagosome membrane. Functionally, lysosomal membrane glycoprotein which plays an important role in lysosome biogenesis, lysosomal pH regulation and autophagy. Acts as an important regulator of lysosomal lumen pH regulation by acting as a direct inhibitor of the proton channel TMEM175, facilitating lysosomal acidification for optimal hydrolase activity. Plays an important role in chaperone-mediated autophagy, a process that mediates lysosomal degradation of proteins in response to various stresses and as part of the normal turnover of proteins with a long biological half-live. Functions by binding target proteins, such as GAPDH, NLRP3 and MLLT11, and targeting them for lysosomal degradation. In the chaperone-mediated autophagy, acts downstream of chaperones, such as HSPA8/HSC70, which recognize and bind substrate proteins and mediate their recruitment to lysosomes, where target proteins bind LAMP2. Plays a role in lysosomal protein degradation in response to starvation. Required for the fusion of autophagosomes with lysosomes during autophagy. Cells that lack LAMP2 express normal levels of VAMP8, but fail to accumulate STX17 on autophagosomes, which is the most likely explanation for the lack of fusion between autophagosomes and lysosomes. Required for normal degradation of the contents of autophagosomes. Required for efficient MHC class II-mediated presentation of exogenous antigens via its function in lysosomal protein degradation; antigenic peptides generated by proteases in the endosomal/lysosomal compartment are captured by nascent MHC II subunits. Is not required for efficient MHC class II-mediated presentation of endogenous antigens. The protein is Lysosome-associated membrane glycoprotein 2 (LAMP2) of Cricetulus griseus (Chinese hamster).